The primary structure comprises 204 residues: Ribosomal RNA small subunit methyltransferase J (204 aa).

S-adenosyl-L-methionine is bound by residues 55–56 (RD), 71–72 (ER), and D123.

Belongs to the methyltransferase superfamily. RsmJ family.

It localises to the cytoplasm. It catalyses the reaction guanosine(1516) in 16S rRNA + S-adenosyl-L-methionine = N(2)-methylguanosine(1516) in 16S rRNA + S-adenosyl-L-homocysteine + H(+). Specifically methylates the guanosine in position 1516 of 16S rRNA. The polypeptide is Ribosomal RNA small subunit methyltransferase J (Rhodopseudomonas palustris (strain ATCC BAA-98 / CGA009)).